Here is a 428-residue protein sequence, read N- to C-terminus: Serine--tRNA ligase (428 aa).

Thr-231–Glu-233 serves as a coordination point for L-serine. An ATP-binding site is contributed by Arg-262 to Glu-264. Glu-285 is a binding site for L-serine. Glu-349 to Ser-352 provides a ligand contact to ATP. Residue Ser-385 coordinates L-serine.

It belongs to the class-II aminoacyl-tRNA synthetase family. Type-1 seryl-tRNA synthetase subfamily. Homodimer. The tRNA molecule binds across the dimer.

The protein resides in the cytoplasm. The enzyme catalyses tRNA(Ser) + L-serine + ATP = L-seryl-tRNA(Ser) + AMP + diphosphate + H(+). The catalysed reaction is tRNA(Sec) + L-serine + ATP = L-seryl-tRNA(Sec) + AMP + diphosphate + H(+). It functions in the pathway aminoacyl-tRNA biosynthesis; selenocysteinyl-tRNA(Sec) biosynthesis; L-seryl-tRNA(Sec) from L-serine and tRNA(Sec): step 1/1. Functionally, catalyzes the attachment of serine to tRNA(Ser). Is also able to aminoacylate tRNA(Sec) with serine, to form the misacylated tRNA L-seryl-tRNA(Sec), which will be further converted into selenocysteinyl-tRNA(Sec). The sequence is that of Serine--tRNA ligase from Staphylococcus carnosus (strain TM300).